The following is a 283-amino-acid chain: NADH-ubiquinone oxidoreductase 30.4 kDa subunit, mitochondrial (283 aa).

Residues 1-17 (MASKLCRSRALASALRS) constitute a mitochondrion transit peptide. The segment at 258-283 (GAGIDRKPESFKLPTPKPETKPEEKK) is disordered.

This sequence belongs to the complex I 30 kDa subunit family. Complex I is composed of about 40 different subunits. This is a component of the iron-sulfur protein fraction.

It is found in the mitochondrion inner membrane. The enzyme catalyses a ubiquinone + NADH + 5 H(+)(in) = a ubiquinol + NAD(+) + 4 H(+)(out). Core subunit of the mitochondrial membrane respiratory chain NADH dehydrogenase (Complex I) that is believed to belong to the minimal assembly required for catalysis. Complex I functions in the transfer of electrons from NADH to the respiratory chain. The immediate electron acceptor for the enzyme is believed to be ubiquinone. The polypeptide is NADH-ubiquinone oxidoreductase 30.4 kDa subunit, mitochondrial (nuo-31) (Neurospora crassa (strain ATCC 24698 / 74-OR23-1A / CBS 708.71 / DSM 1257 / FGSC 987)).